The chain runs to 118 residues: Small ribosomal subunit protein uS13 (118 aa).

Positions 93–118 (RGLPVRGQRTKTNARTRKGPRKPIRK) are disordered.

This sequence belongs to the universal ribosomal protein uS13 family. In terms of assembly, part of the 30S ribosomal subunit. Forms a loose heterodimer with protein S19. Forms two bridges to the 50S subunit in the 70S ribosome.

Its function is as follows. Located at the top of the head of the 30S subunit, it contacts several helices of the 16S rRNA. In the 70S ribosome it contacts the 23S rRNA (bridge B1a) and protein L5 of the 50S subunit (bridge B1b), connecting the 2 subunits; these bridges are implicated in subunit movement. Contacts the tRNAs in the A and P-sites. The sequence is that of Small ribosomal subunit protein uS13 from Pseudomonas paraeruginosa (strain DSM 24068 / PA7) (Pseudomonas aeruginosa (strain PA7)).